The primary structure comprises 833 residues: DNA ligase (833 aa).

NAD(+) contacts are provided by residues 35–39 (DVEYD), 84–85 (SL), and Glu-115. The N6-AMP-lysine intermediate role is filled by Lys-117. 4 residues coordinate NAD(+): Arg-138, Glu-175, Lys-292, and Lys-316. Residues Cys-410, Cys-413, Cys-428, and Cys-434 each coordinate Zn(2+). The BRCT domain maps to 750–833 (VQAGPLDGQT…AFLSEHGQAV (84 aa)).

The protein belongs to the NAD-dependent DNA ligase family. LigA subfamily. Mg(2+) serves as cofactor. The cofactor is Mn(2+).

It catalyses the reaction NAD(+) + (deoxyribonucleotide)n-3'-hydroxyl + 5'-phospho-(deoxyribonucleotide)m = (deoxyribonucleotide)n+m + AMP + beta-nicotinamide D-nucleotide.. In terms of biological role, DNA ligase that catalyzes the formation of phosphodiester linkages between 5'-phosphoryl and 3'-hydroxyl groups in double-stranded DNA using NAD as a coenzyme and as the energy source for the reaction. It is essential for DNA replication and repair of damaged DNA. The chain is DNA ligase from Xanthomonas campestris pv. campestris (strain 8004).